We begin with the raw amino-acid sequence, 1199 residues long: DNA-directed RNA polymerase subunit beta' (1199 aa).

Cys60, Cys62, Cys75, and Cys78 together coordinate Zn(2+). Mg(2+) contacts are provided by Asp449, Asp451, and Asp453. Zn(2+)-binding residues include Cys818, Cys892, Cys899, and Cys902.

This sequence belongs to the RNA polymerase beta' chain family. As to quaternary structure, the RNAP catalytic core consists of 2 alpha, 1 beta, 1 beta' and 1 omega subunit. When a sigma factor is associated with the core the holoenzyme is formed, which can initiate transcription. Mg(2+) serves as cofactor. Requires Zn(2+) as cofactor.

It carries out the reaction RNA(n) + a ribonucleoside 5'-triphosphate = RNA(n+1) + diphosphate. Its function is as follows. DNA-dependent RNA polymerase catalyzes the transcription of DNA into RNA using the four ribonucleoside triphosphates as substrates. The protein is DNA-directed RNA polymerase subunit beta' of Bacillus pumilus (strain SAFR-032).